The sequence spans 404 residues: Probable tRNA sulfurtransferase (404 aa).

In terms of domain architecture, THUMP spans 61–166 (EAVSERLKDV…SGYSYIMCDE (106 aa)). ATP-binding positions include 184 to 185 (LL), 209 to 210 (HF), Arg-266, Gly-288, and Gln-297.

The protein belongs to the ThiI family.

Its subcellular location is the cytoplasm. It carries out the reaction [ThiI sulfur-carrier protein]-S-sulfanyl-L-cysteine + a uridine in tRNA + 2 reduced [2Fe-2S]-[ferredoxin] + ATP + H(+) = [ThiI sulfur-carrier protein]-L-cysteine + a 4-thiouridine in tRNA + 2 oxidized [2Fe-2S]-[ferredoxin] + AMP + diphosphate. The enzyme catalyses [ThiS sulfur-carrier protein]-C-terminal Gly-Gly-AMP + S-sulfanyl-L-cysteinyl-[cysteine desulfurase] + AH2 = [ThiS sulfur-carrier protein]-C-terminal-Gly-aminoethanethioate + L-cysteinyl-[cysteine desulfurase] + A + AMP + 2 H(+). It participates in cofactor biosynthesis; thiamine diphosphate biosynthesis. In terms of biological role, catalyzes the ATP-dependent transfer of a sulfur to tRNA to produce 4-thiouridine in position 8 of tRNAs, which functions as a near-UV photosensor. Also catalyzes the transfer of sulfur to the sulfur carrier protein ThiS, forming ThiS-thiocarboxylate. This is a step in the synthesis of thiazole, in the thiamine biosynthesis pathway. The sulfur is donated as persulfide by IscS. This chain is Probable tRNA sulfurtransferase, found in Bacillus cereus (strain AH187).